The sequence spans 114 residues: MYAIIKTGGKQYRVQEGDIIDVELLNTDPGAQVEFGEVLFAFDGAKTQIGKPGIPNFLVYGEVVGTVKGEKVTSLKYKPSHNQCRKWGHRQHYTRVKITGIGSKRKGKEGNHGS.

It belongs to the bacterial ribosomal protein bL21 family. In terms of assembly, part of the 50S ribosomal subunit. Contacts protein L20.

Functionally, this protein binds to 23S rRNA in the presence of protein L20. This is Large ribosomal subunit protein bL21 from Protochlamydia amoebophila (strain UWE25).